A 271-amino-acid chain; its full sequence is Ribosomal RNA small subunit methyltransferase A (271 aa).

6 residues coordinate S-adenosyl-L-methionine: H11, L13, G38, E59, D84, and N109.

Belongs to the class I-like SAM-binding methyltransferase superfamily. rRNA adenine N(6)-methyltransferase family. RsmA subfamily.

It localises to the cytoplasm. The enzyme catalyses adenosine(1518)/adenosine(1519) in 16S rRNA + 4 S-adenosyl-L-methionine = N(6)-dimethyladenosine(1518)/N(6)-dimethyladenosine(1519) in 16S rRNA + 4 S-adenosyl-L-homocysteine + 4 H(+). Its function is as follows. Specifically dimethylates two adjacent adenosines (A1518 and A1519) in the loop of a conserved hairpin near the 3'-end of 16S rRNA in the 30S particle. May play a critical role in biogenesis of 30S subunits. This chain is Ribosomal RNA small subunit methyltransferase A, found in Nostoc sp. (strain PCC 7120 / SAG 25.82 / UTEX 2576).